The following is a 134-amino-acid chain: Ribosome-binding factor A (134 aa).

The disordered stretch occupies residues 115–134 (EDQRQERGEIPPGSDELQPD).

The protein belongs to the RbfA family. Monomer. Binds 30S ribosomal subunits, but not 50S ribosomal subunits or 70S ribosomes.

The protein localises to the cytoplasm. In terms of biological role, one of several proteins that assist in the late maturation steps of the functional core of the 30S ribosomal subunit. Associates with free 30S ribosomal subunits (but not with 30S subunits that are part of 70S ribosomes or polysomes). Required for efficient processing of 16S rRNA. May interact with the 5'-terminal helix region of 16S rRNA. The protein is Ribosome-binding factor A of Synechococcus sp. (strain CC9902).